A 72-amino-acid polypeptide reads, in one-letter code: Protein RALF-like 12 (72 aa).

An N-terminal signal peptide occupies residues 1–17 (MKAWVIGLLVICAVVIA). 2 disulfide bridges follow: C34–C43 and C63–C69. Residues 37-60 (PNPPPGCNPPGTEQKNPTPVNEYS) form a disordered region.

The protein belongs to the plant rapid alkalinization factor (RALF) family.

The protein resides in the secreted. Its function is as follows. Cell signaling peptide that may regulate plant stress, growth, and development. Mediates a rapid alkalinization of extracellular space by mediating a transient increase in the cytoplasmic Ca(2+) concentration leading to a calcium-dependent signaling events through a cell surface receptor and a concomitant activation of some intracellular mitogen-activated protein kinases. This Arabidopsis thaliana (Mouse-ear cress) protein is Protein RALF-like 12 (RALFL12).